Reading from the N-terminus, the 304-residue chain is N-acetylmuramic acid 6-phosphate etherase (304 aa).

The SIS domain occupies 60–221 (GVSVLRHGGR…STAVMVRLGY (162 aa)). E88 acts as the Proton donor in catalysis. E119 is a catalytic residue.

It belongs to the GCKR-like family. MurNAc-6-P etherase subfamily. As to quaternary structure, homodimer.

It carries out the reaction N-acetyl-D-muramate 6-phosphate + H2O = N-acetyl-D-glucosamine 6-phosphate + (R)-lactate. Its pathway is amino-sugar metabolism; N-acetylmuramate degradation. Specifically catalyzes the cleavage of the D-lactyl ether substituent of MurNAc 6-phosphate, producing GlcNAc 6-phosphate and D-lactate. The chain is N-acetylmuramic acid 6-phosphate etherase from Thermobifida fusca (strain YX).